Reading from the N-terminus, the 84-residue chain is Putative membrane protein insertion efficiency factor (84 aa).

Belongs to the UPF0161 family.

The protein resides in the cell inner membrane. Could be involved in insertion of integral membrane proteins into the membrane. In Shewanella amazonensis (strain ATCC BAA-1098 / SB2B), this protein is Putative membrane protein insertion efficiency factor.